Here is a 484-residue protein sequence, read N- to C-terminus: Probable chitinase 2 (484 aa).

Positions 1–33 (MTLRSRLSGEAPQLWLLLLLASTASSLWASVAA) are cleaved as a signal peptide. The GH18 domain occupies 41 to 432 (KVVVCYVSTW…RTINEATMLA (392 aa)). A disulfide bond links Cys-45 and Cys-70. Chitin-binding positions include 98-99 (EE) and 125-128 (GGWN). Glu-168 acts as the Proton donor in catalysis. Residues Tyr-169, 231-234 (MCYD), and Trp-384 each bind chitin. Ser-467 is subject to Phosphoserine.

The protein belongs to the glycosyl hydrolase 18 family. Chitinase class II subfamily.

It catalyses the reaction Random endo-hydrolysis of N-acetyl-beta-D-glucosaminide (1-&gt;4)-beta-linkages in chitin and chitodextrins.. In Drosophila melanogaster (Fruit fly), this protein is Probable chitinase 2.